The following is a 312-amino-acid chain: Ribonuclease Z (312 aa).

The Zn(2+) site is built by His-62, His-64, Asp-66, His-67, His-144, Asp-215, and His-273. The active-site Proton acceptor is Asp-66.

This sequence belongs to the RNase Z family. Homodimer. Zn(2+) serves as cofactor.

It catalyses the reaction Endonucleolytic cleavage of RNA, removing extra 3' nucleotides from tRNA precursor, generating 3' termini of tRNAs. A 3'-hydroxy group is left at the tRNA terminus and a 5'-phosphoryl group is left at the trailer molecule.. Its function is as follows. Zinc phosphodiesterase, which displays some tRNA 3'-processing endonuclease activity. Probably involved in tRNA maturation, by removing a 3'-trailer from precursor tRNA. The sequence is that of Ribonuclease Z from Prochlorococcus marinus subsp. pastoris (strain CCMP1986 / NIES-2087 / MED4).